A 216-amino-acid chain; its full sequence is Probable GTP-binding protein EngB (216 aa).

The region spanning 21 to 192 (DAPQIALAGR…WRELRALAAG (172 aa)) is the EngB-type G domain. GTP-binding positions include 29–36 (GRSNVGKS), 56–60 (GKTRS), 75–78 (DLPG), 142–145 (TKGD), and 170–173 (VTAS). Residues Ser36 and Thr58 each coordinate Mg(2+). The disordered stretch occupies residues 195 to 216 (SADDEAEDAPSDTIDAIDDVTA). Positions 196-216 (ADDEAEDAPSDTIDAIDDVTA) are enriched in acidic residues.

This sequence belongs to the TRAFAC class TrmE-Era-EngA-EngB-Septin-like GTPase superfamily. EngB GTPase family. The cofactor is Mg(2+).

In terms of biological role, necessary for normal cell division and for the maintenance of normal septation. The polypeptide is Probable GTP-binding protein EngB (Nitratidesulfovibrio vulgaris (strain DP4) (Desulfovibrio vulgaris)).